We begin with the raw amino-acid sequence, 241 residues long: Fatty acid metabolism regulator protein (241 aa).

The HTH gntR-type domain occupies 11 to 79 (QSPAALAEEY…HGKPTKVNNI (69 aa)). The H-T-H motif DNA-binding region spans 39 to 58 (ERDLADKIGVTRTTLREVLQ).

Homodimer.

The protein resides in the cytoplasm. Its function is as follows. Multifunctional regulator of fatty acid metabolism. The protein is Fatty acid metabolism regulator protein of Haemophilus influenzae (strain PittEE).